Reading from the N-terminus, the 389-residue chain is Major outer membrane porin (389 aa).

This sequence belongs to the chlamydial porin (CP) (TC 1.B.2) family. As to quaternary structure, part of a disulfide cross-linked outer membrane complex (COMC) composed of the major outer membrane porin (MOMP), the small cysteine-rich protein (OmcA) and the large cysteine-rich periplasmic protein (OmcB).

Its subcellular location is the cell outer membrane. Its function is as follows. In elementary bodies (EBs, the infectious stage, which is able to survive outside the host cell) provides the structural integrity of the outer envelope through disulfide cross-links with the small cysteine-rich protein and the large cysteine-rich periplasmic protein. It has been described in publications as the Sarkosyl-insoluble COMC (Chlamydia outer membrane complex), and serves as the functional equivalent of peptidoglycan. Functionally, permits diffusion of specific solutes through the outer membrane. The protein is Major outer membrane porin (ompA) of Chlamydia pneumoniae (Chlamydophila pneumoniae).